The following is an 84-amino-acid chain: Molybdopterin synthase sulfur carrier subunit (84 aa).

A 1-thioglycine; alternate modification is found at Gly-84. Residue Gly-84 is modified to Glycyl adenylate; alternate.

It belongs to the MoaD family. MOCS2A subfamily. Heterotetramer; composed of 2 small (MOCS2A) and 2 large (MOCS2B) subunits. C-terminal thiocarboxylation occurs in 2 steps, it is first acyl-adenylated (-COAMP) via the hesA/moeB/thiF part of MOCS3, then thiocarboxylated (-COSH) via the rhodanese domain of MOCS3.

It localises to the cytoplasm. It functions in the pathway cofactor biosynthesis; molybdopterin biosynthesis. In terms of biological role, acts as a sulfur carrier required for molybdopterin biosynthesis. Component of the molybdopterin synthase complex that catalyzes the conversion of precursor Z into molybdopterin by mediating the incorporation of 2 sulfur atoms into precursor Z to generate a dithiolene group. In the complex, serves as sulfur donor by being thiocarboxylated (-COSH) at its C-terminus by MOCS3. After interaction with MOCS2B, the sulfur is then transferred to precursor Z to form molybdopterin. The chain is Molybdopterin synthase sulfur carrier subunit from Caenorhabditis elegans.